A 322-amino-acid polypeptide reads, in one-letter code: Probable manganese-dependent inorganic pyrophosphatase (322 aa).

The Mn(2+) site is built by His10, Asp14, Asp16, Asp86, His108, and Asp160.

This sequence belongs to the PPase class C family. It depends on Mn(2+) as a cofactor.

It localises to the cytoplasm. It carries out the reaction diphosphate + H2O = 2 phosphate + H(+). The protein is Probable manganese-dependent inorganic pyrophosphatase (ppaC) of Archaeoglobus fulgidus (strain ATCC 49558 / DSM 4304 / JCM 9628 / NBRC 100126 / VC-16).